Consider the following 152-residue polypeptide: Ribonuclease H (152 aa).

The region spanning 1–142 is the RNase H type-1 domain; sequence MDSKVVIYTD…ADKLAVQGRE (142 aa). Mg(2+) is bound by residues D10, E48, D70, and D134.

The protein belongs to the RNase H family. Monomer. It depends on Mg(2+) as a cofactor.

It localises to the cytoplasm. The enzyme catalyses Endonucleolytic cleavage to 5'-phosphomonoester.. Endonuclease that specifically degrades the RNA of RNA-DNA hybrids. The polypeptide is Ribonuclease H (Rickettsia typhi (strain ATCC VR-144 / Wilmington)).